A 365-amino-acid chain; its full sequence is Ferrochelatase (365 aa).

Positions 211 and 292 each coordinate Fe cation.

The protein belongs to the ferrochelatase family.

It is found in the cytoplasm. The catalysed reaction is heme b + 2 H(+) = protoporphyrin IX + Fe(2+). Its pathway is porphyrin-containing compound metabolism; protoheme biosynthesis; protoheme from protoporphyrin-IX: step 1/1. Its function is as follows. Catalyzes the ferrous insertion into protoporphyrin IX. The protein is Ferrochelatase of Aromatoleum aromaticum (strain DSM 19018 / LMG 30748 / EbN1) (Azoarcus sp. (strain EbN1)).